A 254-amino-acid polypeptide reads, in one-letter code: Probable WRKY transcription factor 67 (254 aa).

Positions 102-170 (SRTMCPNDGF…YLGKHVCKAF (69 aa)) form a DNA-binding region, WRKY.

It belongs to the WRKY group III family.

The protein resides in the nucleus. Its function is as follows. Transcription factor. Interacts specifically with the W box (5'-(T)TGAC[CT]-3'), a frequently occurring elicitor-responsive cis-acting element. The protein is Probable WRKY transcription factor 67 (WRKY67) of Arabidopsis thaliana (Mouse-ear cress).